Reading from the N-terminus, the 274-residue chain is Diaminopimelate epimerase (274 aa).

Residues N11, Q44, and N64 each coordinate substrate. C73 (proton donor) is an active-site residue. Substrate is bound by residues 74–75 (GN), N157, N190, and 208–209 (ER). The active-site Proton acceptor is the C217. 218-219 (GS) is a binding site for substrate.

This sequence belongs to the diaminopimelate epimerase family. As to quaternary structure, homodimer.

Its subcellular location is the cytoplasm. It catalyses the reaction (2S,6S)-2,6-diaminopimelate = meso-2,6-diaminopimelate. It functions in the pathway amino-acid biosynthesis; L-lysine biosynthesis via DAP pathway; DL-2,6-diaminopimelate from LL-2,6-diaminopimelate: step 1/1. In terms of biological role, catalyzes the stereoinversion of LL-2,6-diaminopimelate (L,L-DAP) to meso-diaminopimelate (meso-DAP), a precursor of L-lysine and an essential component of the bacterial peptidoglycan. This Photorhabdus laumondii subsp. laumondii (strain DSM 15139 / CIP 105565 / TT01) (Photorhabdus luminescens subsp. laumondii) protein is Diaminopimelate epimerase.